Here is a 242-residue protein sequence, read N- to C-terminus: Polycomb group RING finger protein 3 (242 aa).

Residues 17–56 (CRLCNGYLIDATTVTECLHTFCRSCLVKYLEENNTCPTCR) form an RING-type zinc finger. Positions 120–149 (EAHRNGETKTDEHTHKEPPEEKQEEDHDYH) are disordered.

As to quaternary structure, component of a PRC1-like complex.

Its subcellular location is the nucleus. In terms of biological role, component of a Polycomb group (PcG) multiprotein PRC1-like complex, a complex class required to maintain the transcriptionally repressive state of many genes, including Hox genes, throughout development. PcG PRC1 complex acts via chromatin remodeling and modification of histones; it mediates monoubiquitination of histone H2A 'Lys-119', rendering chromatin heritably changed in its expressibility. Within the PRC1-like complex, regulates RNF2 ubiquitin ligase activity. The polypeptide is Polycomb group RING finger protein 3 (pcgf3) (Xenopus tropicalis (Western clawed frog)).